Reading from the N-terminus, the 537-residue chain is ATP synthase subunit alpha (537 aa).

171-178 (GDRQTGKT) lines the ATP pocket.

The protein belongs to the ATPase alpha/beta chains family. F-type ATPases have 2 components, CF(1) - the catalytic core - and CF(0) - the membrane proton channel. CF(1) has five subunits: alpha(3), beta(3), gamma(1), delta(1), epsilon(1). CF(0) has four main subunits: a, b, b' and c.

The protein localises to the cell inner membrane. It catalyses the reaction ATP + H2O + 4 H(+)(in) = ADP + phosphate + 5 H(+)(out). Produces ATP from ADP in the presence of a proton gradient across the membrane. The alpha chain is a regulatory subunit. This Chloroherpeton thalassium (strain ATCC 35110 / GB-78) protein is ATP synthase subunit alpha.